The primary structure comprises 432 residues: UPF0761 membrane protein Cag_0935 (432 aa).

6 consecutive transmembrane segments (helical) span residues 52-72 (LLSI…FEVF), 108-128 (NIPL…LSTV), 148-168 (FTLY…SLAA), 190-210 (LLAL…YMLV), 220-240 (AFAG…WFLF), and 254-274 (ALSV…VVLV).

It belongs to the UPF0761 family.

The protein localises to the cell inner membrane. This chain is UPF0761 membrane protein Cag_0935, found in Chlorobium chlorochromatii (strain CaD3).